The chain runs to 149 residues: UPF0260 protein Pput_1301 (149 aa).

The protein belongs to the UPF0260 family.

The polypeptide is UPF0260 protein Pput_1301 (Pseudomonas putida (strain ATCC 700007 / DSM 6899 / JCM 31910 / BCRC 17059 / LMG 24140 / F1)).